Reading from the N-terminus, the 77-residue chain is Small ribosomal subunit protein bS21 (77 aa).

Belongs to the bacterial ribosomal protein bS21 family.

This Methylococcus capsulatus (strain ATCC 33009 / NCIMB 11132 / Bath) protein is Small ribosomal subunit protein bS21.